Consider the following 101-residue polypeptide: Small ribosomal subunit protein uS14m (101 aa).

It belongs to the universal ribosomal protein uS14 family. Component of the mitochondrial ribosome small subunit (28S) which comprises a 12S rRNA and about 30 distinct proteins. Interacts with LIAT1.

The protein localises to the mitochondrion. This is Small ribosomal subunit protein uS14m (mrps14) from Dictyostelium citrinum (Slime mold).